A 295-amino-acid chain; its full sequence is Enolase-phosphatase E1 (295 aa).

Mg(2+)-binding residues include Asp20 and Glu22. Residues 153–154 and Lys187 each bind substrate; that span reads SS. Residue Asp212 participates in Mg(2+) binding. The segment at 260-295 is disordered; the sequence is ETKEENGGATNGKRKIEETNDDVAEEDKAQVYPNKK.

This sequence belongs to the HAD-like hydrolase superfamily. MasA/MtnC family. As to quaternary structure, monomer. The cofactor is Mg(2+).

Its subcellular location is the cytoplasm. The protein localises to the nucleus. The enzyme catalyses 5-methylsulfanyl-2,3-dioxopentyl phosphate + H2O = 1,2-dihydroxy-5-(methylsulfanyl)pent-1-en-3-one + phosphate. It participates in amino-acid biosynthesis; L-methionine biosynthesis via salvage pathway; L-methionine from S-methyl-5-thio-alpha-D-ribose 1-phosphate: step 3/6. The protein operates within amino-acid biosynthesis; L-methionine biosynthesis via salvage pathway; L-methionine from S-methyl-5-thio-alpha-D-ribose 1-phosphate: step 4/6. Bifunctional enzyme that catalyzes the enolization of 2,3-diketo-5-methylthiopentyl-1-phosphate (DK-MTP-1-P) into the intermediate 2-hydroxy-3-keto-5-methylthiopentenyl-1-phosphate (HK-MTPenyl-1-P), which is then dephosphorylated to form the acireductone 1,2-dihydroxy-3-keto-5-methylthiopentene (DHK-MTPene). The chain is Enolase-phosphatase E1 from Anopheles gambiae (African malaria mosquito).